Reading from the N-terminus, the 536-residue chain is uncharacterized protein (536 aa).

2 disordered regions span residues Met1–Ser76 and Asn204–Ser237. 2 stretches are compositionally biased toward low complexity: residues Thr7–Ser76 and Asn204–Ser234. The chain crosses the membrane as a helical span at residues Cys247–Trp267. Disordered regions lie at residues Tyr287–Gly354 and Asp373–Phe536. Residues Asn290–Asn326 are compositionally biased toward polar residues. Residues Gly327 to Gly350 are compositionally biased toward low complexity. A helical transmembrane segment spans residues Leu351–Gly371. Polar residues predominate over residues Ser403–Leu424. A compositionally biased stretch (low complexity) spans Glu430–Ser454. The segment covering Ser480–Tyr509 has biased composition (polar residues). Low complexity predominate over residues Ser517 to Ser527.

The protein resides in the membrane. This is an uncharacterized protein from Schizosaccharomyces pombe (strain 972 / ATCC 24843) (Fission yeast).